The chain runs to 221 residues: DNA mismatch repair protein MutH (221 aa).

The protein belongs to the MutH family.

The protein localises to the cytoplasm. In terms of biological role, sequence-specific endonuclease that cleaves unmethylated GATC sequences. It is involved in DNA mismatch repair. The polypeptide is DNA mismatch repair protein MutH (Vibrio cholerae serotype O1 (strain ATCC 39315 / El Tor Inaba N16961)).